A 204-amino-acid chain; its full sequence is Methyl-CpG-binding domain protein 3-like 2B (204 aa).

Residues 126 to 137 are compositionally biased toward basic and acidic residues; sequence SLDRAGAERVRS. Residues 126 to 145 are disordered; that stretch reads SLDRAGAERVRSPLEPTPGR.

It belongs to the MBD3L family.

This Homo sapiens (Human) protein is Methyl-CpG-binding domain protein 3-like 2B.